We begin with the raw amino-acid sequence, 174 residues long: MTQTIFMVGARGAGKTTIGKALAQALGYRFIDTDLFMQQTLQSSVAEIVAREGWDGFRLRESMALQTVTAPKTVVATGGGAVLSHDNRTFMRQHGMVIYLRASANVLAERLAEDPEDAQRPSLTGKPIVEEMLDVLASREPLYQEVAHHVLDATQPPEEVVEQILHILADEKVK.

12–17 contacts ATP; the sequence is GAGKTT. Mg(2+) is bound by residues Thr16 and Asp32. Substrate contacts are provided by Asp34, Arg58, and Gly79. The segment at 112–126 is LID domain; that stretch reads AEDPEDAQRPSLTGK. Residue Arg120 participates in ATP binding. Residue Arg139 coordinates substrate. Position 155 (Gln155) interacts with ATP.

Belongs to the shikimate kinase family. AroL subfamily. As to quaternary structure, monomer. Requires Mg(2+) as cofactor.

It localises to the cytoplasm. It carries out the reaction shikimate + ATP = 3-phosphoshikimate + ADP + H(+). The protein operates within metabolic intermediate biosynthesis; chorismate biosynthesis; chorismate from D-erythrose 4-phosphate and phosphoenolpyruvate: step 5/7. Catalyzes the specific phosphorylation of the 3-hydroxyl group of shikimic acid using ATP as a cosubstrate. The chain is Shikimate kinase 2 from Yersinia enterocolitica serotype O:8 / biotype 1B (strain NCTC 13174 / 8081).